The chain runs to 469 residues: Aspartyl/glutamyl-tRNA(Asn/Gln) amidotransferase subunit B (469 aa).

Belongs to the GatB/GatE family. GatB subfamily. As to quaternary structure, heterotrimer of A, B and C subunits.

The enzyme catalyses L-glutamyl-tRNA(Gln) + L-glutamine + ATP + H2O = L-glutaminyl-tRNA(Gln) + L-glutamate + ADP + phosphate + H(+). The catalysed reaction is L-aspartyl-tRNA(Asn) + L-glutamine + ATP + H2O = L-asparaginyl-tRNA(Asn) + L-glutamate + ADP + phosphate + 2 H(+). In terms of biological role, allows the formation of correctly charged Asn-tRNA(Asn) or Gln-tRNA(Gln) through the transamidation of misacylated Asp-tRNA(Asn) or Glu-tRNA(Gln) in organisms which lack either or both of asparaginyl-tRNA or glutaminyl-tRNA synthetases. The reaction takes place in the presence of glutamine and ATP through an activated phospho-Asp-tRNA(Asn) or phospho-Glu-tRNA(Gln). This Methanococcus vannielii (strain ATCC 35089 / DSM 1224 / JCM 13029 / OCM 148 / SB) protein is Aspartyl/glutamyl-tRNA(Asn/Gln) amidotransferase subunit B.